The chain runs to 369 residues: Glutamate 5-kinase (369 aa).

Lys-9 is an ATP binding site. Substrate contacts are provided by Ser-49, Asp-136, and Asn-148. Residues 168–169 (TD) and 210–216 (TGGMLTK) each bind ATP. The 81-residue stretch at 275–355 (QGSIWVDKGA…KGVLIYRDDW (81 aa)) folds into the PUA domain.

The protein belongs to the glutamate 5-kinase family.

It is found in the cytoplasm. It carries out the reaction L-glutamate + ATP = L-glutamyl 5-phosphate + ADP. It functions in the pathway amino-acid biosynthesis; L-proline biosynthesis; L-glutamate 5-semialdehyde from L-glutamate: step 1/2. Catalyzes the transfer of a phosphate group to glutamate to form L-glutamate 5-phosphate. The chain is Glutamate 5-kinase from Streptococcus pneumoniae (strain Hungary19A-6).